Consider the following 219-residue polypeptide: Uracil-DNA glycosylase (219 aa).

The Proton acceptor role is filled by Asp61.

The protein belongs to the uracil-DNA glycosylase (UDG) superfamily. UNG family.

The protein localises to the cytoplasm. The enzyme catalyses Hydrolyzes single-stranded DNA or mismatched double-stranded DNA and polynucleotides, releasing free uracil.. Excises uracil residues from the DNA which can arise as a result of misincorporation of dUMP residues by DNA polymerase or due to deamination of cytosine. The protein is Uracil-DNA glycosylase of Neisseria meningitidis serogroup A / serotype 4A (strain DSM 15465 / Z2491).